Consider the following 147-residue polypeptide: Deoxyuridine 5'-triphosphate nucleotidohydrolase (147 aa).

Substrate contacts are provided by residues 63–65 (RSG), N76, and 80–82 (TID).

This sequence belongs to the dUTPase family. Mg(2+) serves as cofactor.

The catalysed reaction is dUTP + H2O = dUMP + diphosphate + H(+). It participates in pyrimidine metabolism; dUMP biosynthesis; dUMP from dCTP (dUTP route): step 2/2. This enzyme is involved in nucleotide metabolism: it produces dUMP, the immediate precursor of thymidine nucleotides and it decreases the intracellular concentration of dUTP so that uracil cannot be incorporated into DNA. The polypeptide is Deoxyuridine 5'-triphosphate nucleotidohydrolase (Chlamydia abortus (strain DSM 27085 / S26/3) (Chlamydophila abortus)).